The following is a 514-amino-acid chain: MVDKFLIETDQNEFQPNLWKNGDSDRLPNRCPETQLNVLVVGAGPSGLMTALECWRKGHNVVKILERSNSPVFTGDVIVIGPSALRAFRHWPDMCAELEKSKMDSIMYYRKHNGELILGPTSLGHNDPEYTAAWKGIPFAAPHQIRKDFYRMLLRQVARVGIRVEYGQRVEKYFDDEAAMLGGVITDQGTIMFADLVVAADANRTRSDLLIAGAHTPSRSSGMSVYRTAFPTERALQDEAFRTRWGDAIEKGISHHEFWMGPGMHLGLFISPEFVAFGLTPRDSFLHEGGNEPIESWEPDVDPEEVTKVLNRVPDWNPVIKSLVKNTQRGSIVHWPLLWRNLRREWTSKSGRVVQAGDAAHSSIPASISGGTLALEDAVTLASCLHLSCSSAGSKGAPLGARIYNLLRYQRVSCVQKMSFVNAEGLSGSSMEDAIKENPESVRVRFPRWLYRHDPEAYVYEKYGQAFAHLVEGTDFENTNLPPGHTFEPWTIEQIHKDMMAGKRVADFLDGDWS.

Val79 and Arg146 together coordinate FAD. Arg227 is a catalytic residue. FAD-binding residues include Asp358 and Gly371.

Belongs to the paxM FAD-dependent monooxygenase family. The cofactor is FAD.

It participates in pigment biosynthesis. Its function is as follows. FAD-dependent monooxygenase; part of the ergochrome gene cluster responsible for the typical purple-black color of the ergot sclerotia. The ergochrome gene cluster produces several ergot pigments including the yellow ergochrome secalonic acid and its derivatives, as well as the red anthraquinones endocrocin and clavorubin. The pathway begins with the synthesis of atrochrysone thioester by the polyketide synthase (PKS) CPUR_05437. The atrochrysone carboxyl ACP thioesterase CPUR_05436 then breaks the thioester bond and releases the atrochrysone carboxylic acid from CPUR_05437. The atrochrysone carboxylic acid is then converted to atrochrysone which is further transformed into emodin anthrone. The next step is performed by the anthrone oxygenase CPUR_05434 that catalyzes the oxidation of emodinanthrone to emodin. Emodin is further modified to yield monodictyphenone via several steps involving CPUR_05427, CPUR_05428, CPUR_05429 and CPUR_05430. The short chain dehydrogenase/reductase CPUR_05418 then catalyzes the C-5 ketoreduction to give the xanthone skeleton of the monomeric units. Ergochromes formation requires further dimerization steps of different xanthone units, probably catalyzed by the cytochrome P450 monooxygenase CPUR_05419. CPUR_05425, CPUR_05426 and CPUR_05431 are unique to Claviceps, thus it is likely that they are involved in further modification of xanthone units or in their dimerization. The yellow ergochromes and the red anthraquinone pigments endocrocin and clavorubin are products from the same PKS derived precursors and the latter are likely shunt products in the pathway of xanthone biosynthesis. It is proposed that atrochrysone carboxylic acid released from the PKS CPUR_05437 can also be converted to endocrocin anthrone which is further oxidized into endocrocin by CPUR_05435. Endocrocin could be then modified to clavorubin, possibly by CPUR_05423 and CPUR_05431. Clavorubin is the principal anthraquinone metabolite produced by the cluster with a much higher yield compared to endocrocin. This Claviceps purpurea (strain 20.1) (Ergot fungus) protein is FAD-dependent monooxygenase CPUR_05423.